We begin with the raw amino-acid sequence, 929 residues long: Isoleucine--tRNA ligase (929 aa).

Residues 58-68 carry the 'HIGH' region motif; sequence PYANGDIHIGH. Glu-568 provides a ligand contact to L-isoleucyl-5'-AMP. The short motif at 609-613 is the 'KMSKS' region element; it reads KMSKS. Lys-612 provides a ligand contact to ATP. Cys-892, Cys-895, Cys-912, and Cys-915 together coordinate Zn(2+).

Belongs to the class-I aminoacyl-tRNA synthetase family. IleS type 1 subfamily. Monomer. Zn(2+) is required as a cofactor.

Its subcellular location is the cytoplasm. The enzyme catalyses tRNA(Ile) + L-isoleucine + ATP = L-isoleucyl-tRNA(Ile) + AMP + diphosphate. Functionally, catalyzes the attachment of isoleucine to tRNA(Ile). As IleRS can inadvertently accommodate and process structurally similar amino acids such as valine, to avoid such errors it has two additional distinct tRNA(Ile)-dependent editing activities. One activity is designated as 'pretransfer' editing and involves the hydrolysis of activated Val-AMP. The other activity is designated 'posttransfer' editing and involves deacylation of mischarged Val-tRNA(Ile). The protein is Isoleucine--tRNA ligase of Thiobacillus denitrificans (strain ATCC 25259 / T1).